We begin with the raw amino-acid sequence, 510 residues long: NAD(P)H-quinone oxidoreductase subunit 2 B, chloroplastic (510 aa).

The next 13 membrane-spanning stretches (helical) occupy residues 24-44 (LLLF…GLIL), 57-77 (IPWL…SLLF), 99-119 (IFQF…VEYI), 124-144 (MAIT…MFLC), 149-169 (LITI…LSGY), 183-203 (YLLM…WLYG), 227-247 (PGIS…LSPA), 295-315 (WHLL…LIAI), 323-343 (MLAY…IVGD), 354-374 (YMLF…LFGL), 395-415 (ALSL…AGFF), 418-438 (LYLF…IGLL), and 484-504 (MIVC…IIAI).

The protein belongs to the complex I subunit 2 family. In terms of assembly, NDH is composed of at least 16 different subunits, 5 of which are encoded in the nucleus.

It is found in the plastid. It localises to the chloroplast thylakoid membrane. The enzyme catalyses a plastoquinone + NADH + (n+1) H(+)(in) = a plastoquinol + NAD(+) + n H(+)(out). It catalyses the reaction a plastoquinone + NADPH + (n+1) H(+)(in) = a plastoquinol + NADP(+) + n H(+)(out). In terms of biological role, NDH shuttles electrons from NAD(P)H:plastoquinone, via FMN and iron-sulfur (Fe-S) centers, to quinones in the photosynthetic chain and possibly in a chloroplast respiratory chain. The immediate electron acceptor for the enzyme in this species is believed to be plastoquinone. Couples the redox reaction to proton translocation, and thus conserves the redox energy in a proton gradient. This chain is NAD(P)H-quinone oxidoreductase subunit 2 B, chloroplastic, found in Lactuca sativa (Garden lettuce).